A 313-amino-acid polypeptide reads, in one-letter code: D-alanine--D-alanine ligase (313 aa).

One can recognise an ATP-grasp domain in the interval K108–S308. Position 138 to 193 (V138 to Y193) interacts with ATP. 3 residues coordinate Mg(2+): D262, E275, and N277.

It belongs to the D-alanine--D-alanine ligase family. Mg(2+) serves as cofactor. Mn(2+) is required as a cofactor.

Its subcellular location is the cytoplasm. The catalysed reaction is 2 D-alanine + ATP = D-alanyl-D-alanine + ADP + phosphate + H(+). Its pathway is cell wall biogenesis; peptidoglycan biosynthesis. In terms of biological role, cell wall formation. This Burkholderia ambifaria (strain MC40-6) protein is D-alanine--D-alanine ligase.